The chain runs to 370 residues: tRNA pseudouridine synthase D (370 aa).

The Nucleophile role is filled by Asp-77. Positions 152–297 (GVPNYFGEQR…LEQERRPLLL (146 aa)) constitute a TRUD domain.

This sequence belongs to the pseudouridine synthase TruD family.

It carries out the reaction uridine(13) in tRNA = pseudouridine(13) in tRNA. Responsible for synthesis of pseudouridine from uracil-13 in transfer RNAs. The sequence is that of tRNA pseudouridine synthase D from Shewanella oneidensis (strain ATCC 700550 / JCM 31522 / CIP 106686 / LMG 19005 / NCIMB 14063 / MR-1).